The sequence spans 935 residues: Potassium channel AKT1 (935 aa).

The Cytoplasmic segment spans residues 1 to 106; it reads MARWGAARMA…YDRRYRIWET (106 aa). A helical transmembrane segment spans residues 107-127; it reads FLIVLVVYSAWVSPFEFGFIP. The Extracellular segment spans residues 128-136; the sequence is KPTGALATA. The chain crosses the membrane as a helical span at residues 137 to 157; it reads DNVVNAFFAVDIILTFFVAYL. Over 158-178 the chain is Cytoplasmic; the sequence is DKMSYMLEDDPKKIAWRYSTT. A helical membrane pass occupies residues 179 to 199; that stretch reads WLVLDVASTIPSEFARRILPS. Topologically, residues 200–205 are extracellular; sequence KLRSYG. The helical; Voltage-sensor transmembrane segment at 206 to 226 threads the bilayer; that stretch reads FFNMLRLWRLRRVSSLFSRLE. Residues 227-240 lie on the Cytoplasmic side of the membrane; the sequence is KDRHFNYFWVRCAK. The chain crosses the membrane as a helical span at residues 241–261; it reads LICVTLFAVHCAACFYYLLAD. At 262–288 the chain is on the extracellular side; the sequence is RYPVPTSTWIGNYMADFHERSLWIRYV. Residues 289–308 constitute an intramembrane region (pore-forming); it reads TSVYWSITTLTTVGYGDLHA. Residues 309–312 are Extracellular-facing; sequence ENTR. The chain crosses the membrane as a helical span at residues 313-333; it reads EMIFNIFYMLFNLGLTAYLIG. Topologically, residues 334 to 935 are cytoplasmic; the sequence is NMTNLVVHGT…WDAEKMKGKS (602 aa). Residue 419–538 coordinates a nucleoside 3',5'-cyclic phosphate; the sequence is LFQGVSNDLI…TIIMNNLIQF (120 aa). ANK repeat units lie at residues 565–594, 598–627, 631–660, 662–691, 695–724, and 728–757; these read DLPITLCFAVTRGDDFLLHQLLKRGMDPNE, DGHTALHIAASKGNEQCVRLLLEYGADPNA, EGKVPLWEALCEKHAAVVQLLVEGGADLSS, DTGLYACIAVEESDTELLNDIIHYGGDVNR, DGTTALHRAVCDGNVQMAELLLEHGADIDK, and NGWTPRALAEQQGHDDIQLLFRSRKAATAS. Positions 826-854 are disordered; it reads SQAQRETDHPLSRGGLAATGSPNPSSGSR. Positions 845–854 are enriched in polar residues; the sequence is GSPNPSSGSR. Positions 859–935 constitute a KHA domain; it reads RVTISCPEKG…WDAEKMKGKS (77 aa).

Belongs to the potassium channel family. Plant (TC 1.A.1.4) subfamily. The potassium channel is probably a homo- or heterotetrameric complex of pore-forming subunits. Highly expressed in the epidermis and endodermis of roots, and at lower level in cells of the vasculature and the cortex. Expressed in xylem parenchyma, phloem and mesophyll cells of leaves.

Its subcellular location is the membrane. Its function is as follows. Highly selective inward-rectifying potassium channel that mediates potassium uptake by plant roots. The sequence is that of Potassium channel AKT1 (AKT1) from Oryza sativa subsp. indica (Rice).